The chain runs to 116 residues: Ig heavy chain V region 3-6 (116 aa).

The N-terminal stretch at 1 to 18 (MKVLSLLYLLTAIPGILS) is a signal peptide. Positions 19–48 (DVQLQESGPGLVKPSQSLSLTCSVTGYSIT) are framework-1. Cysteines 40 and 114 form a disulfide. The complementarity-determining-1 stretch occupies residues 49-53 (SGYYW). Residues 54-67 (NWIRQFPGNKLEWM) are framework-2. The interval 68-84 (GYISYDGSNNYNPSLKN) is complementarity-determining-2. A framework-3 region spans residues 85–116 (RISITRDTSKNQFFLKLNSVTTEDTATYYCAR).

This chain is Ig heavy chain V region 3-6 (Ighv3-6), found in Mus musculus (Mouse).